A 349-amino-acid chain; its full sequence is UDP-N-acetylenolpyruvoylglucosamine reductase (349 aa).

Residues 25–197 (GIAARARFAA…VAVTFRLPKQ (173 aa)) enclose the FAD-binding PCMH-type domain. Arginine 173 is a catalytic residue. Residue serine 249 is the Proton donor of the active site. Glutamate 345 is an active-site residue.

The protein belongs to the MurB family. Requires FAD as cofactor.

It localises to the cytoplasm. The catalysed reaction is UDP-N-acetyl-alpha-D-muramate + NADP(+) = UDP-N-acetyl-3-O-(1-carboxyvinyl)-alpha-D-glucosamine + NADPH + H(+). It participates in cell wall biogenesis; peptidoglycan biosynthesis. Its function is as follows. Cell wall formation. The protein is UDP-N-acetylenolpyruvoylglucosamine reductase of Burkholderia cenocepacia (strain HI2424).